A 206-amino-acid polypeptide reads, in one-letter code: Large ribosomal subunit protein eL13z (206 aa).

The interval 183 to 206 (ERTNKRHAGARAKRAADAEKEEKK) is disordered. Over residues 186–195 (NKRHAGARAK) the composition is skewed to basic residues. The segment covering 196–206 (RAADAEKEEKK) has biased composition (basic and acidic residues).

The protein belongs to the eukaryotic ribosomal protein eL13 family.

The sequence is that of Large ribosomal subunit protein eL13z from Brassica napus (Rape).